A 494-amino-acid polypeptide reads, in one-letter code: Putative NAD kinase 3 (494 aa).

This sequence belongs to the NAD kinase family.

The catalysed reaction is NAD(+) + ATP = ADP + NADP(+) + H(+). This is Putative NAD kinase 3 from Oryza sativa subsp. japonica (Rice).